A 76-amino-acid polypeptide reads, in one-letter code: Immune protein Tsi5 (76 aa).

The next 2 membrane-spanning stretches (helical) occupy residues 19-39 and 43-63; these read LLMTLVCIPLALLYVCLEWFF and WVTVGVFFGVLVVLRLGLYLY.

The protein localises to the membrane. In terms of biological role, immunity protein that plays a role in preventing early activation of toxin Tse5. The protein is Immune protein Tsi5 of Pseudomonas aeruginosa (strain ATCC 15692 / DSM 22644 / CIP 104116 / JCM 14847 / LMG 12228 / 1C / PRS 101 / PAO1).